We begin with the raw amino-acid sequence, 221 residues long: Ras-related protein Rab-27A (221 aa).

S2 carries the N-acetylserine modification. Position 2 is a phosphoserine (S2). Residue 16 to 24 participates in GTP binding; that stretch reads GDSGVGKTS. The short motif at 38 to 46 is the Effector region element; it reads FITTVGIDF. GTP contacts are provided by residues 74–78, 133–136, and 163–165; these read DTAGQ, NKSD, and SAA. C123 and C188 are disulfide-bonded. Residues C219 and C221 are each lipidated (S-geranylgeranyl cysteine). Position 221 is a cysteine methyl ester (C221).

This sequence belongs to the small GTPase superfamily. Rab family. As to quaternary structure, binds SYTL1, SYTL2, SLAC2B, MYRIP, SYTL3, SYTL4, SYTL5 and MLPH. Interacts with UNC13D. Interacts with RPH3A and RPH3A. Does not interact with the BLOC-3 complex (heterodimer of HPS1 and HPS4). Interacts (GDP-bound form preferentially) with DENND10. As to expression, detected in melanocytes. Expressed abundantly in the stomach and is predominantly localized at the apical region of gastric-surface mucus cells. Also expressed in the thymus and lung.

Its subcellular location is the membrane. The protein localises to the melanosome. The protein resides in the late endosome. It is found in the lysosome. The catalysed reaction is GTP + H2O = GDP + phosphate + H(+). Regulated by guanine nucleotide exchange factors (GEFs) which promote the exchange of bound GDP for free GTP, GTPase activating proteins (GAPs) which increase the GTP hydrolysis activity, and GDP dissociation inhibitors which inhibit the dissociation of the nucleotide from the GTPase. Activated by GEFs such as DENND10. Functionally, small GTPase which cycles between active GTP-bound and inactive GDP-bound states. In its active state, binds to a variety of effector proteins to regulate homeostasis of late endocytic pathway, including endosomal positioning, maturation and secretion. Plays a role in cytotoxic granule exocytosis in lymphocytes. Required for both granule maturation and granule docking and priming at the immunologic synapse. In Mus musculus (Mouse), this protein is Ras-related protein Rab-27A (Rab27a).